A 299-amino-acid polypeptide reads, in one-letter code: NmrA-like family domain-containing protein 1 (299 aa).

NADP(+)-binding positions include 11 to 16, 37 to 41, 58 to 59, 79 to 81, Lys92, Lys133, and 155 to 158; these read GATGAQ, RDPGQ, DQ, TNY, and YFEN. The segment at 153–189 is interaction with ASS1; sequence PCYFENLLSYFLPQKAPDGRSYLLSLPMGDVPIDGMS.

Belongs to the NmrA-type oxidoreductase family. Homodimer. Interacts with ASS1. Interaction is enhanced by low NADPH/NADP(+) ratios, which results in inhibition of ASS1 activity.

The protein localises to the cytoplasm. The protein resides in the perinuclear region. It localises to the nucleus. Its function is as follows. Redox sensor protein. Undergoes restructuring and subcellular redistribution in response to changes in intracellular NADPH/NADP(+) levels. At low NADPH concentrations the protein is found mainly as a monomer, and binds argininosuccinate synthase (ASS1), the enzyme involved in nitric oxide synthesis. Association with ASS1 impairs its activity and reduces the production of nitric oxide, which subsecuently prevents apoptosis. Under normal NADPH concentrations, the protein is found as a dimer and hides the binding site for ASS1. The homodimer binds one molecule of NADPH. Has higher affinity for NADPH than for NADP(+). Binding to NADPH is necessary to form a stable dimer. The chain is NmrA-like family domain-containing protein 1 (NMRAL1) from Bos taurus (Bovine).